A 282-amino-acid polypeptide reads, in one-letter code: Stress response regulator protein 1 (282 aa).

Low complexity-rich tracts occupy residues 12-30 (NLSR…HSST) and 41-58 (SLDT…SNNN). Disordered regions lie at residues 12–31 (NLSR…SSTV), 41–84 (SLDT…DDED), and 112–139 (LTPF…TTVV). Over residues 66 to 77 (SDYNSYTHNQYY) the composition is skewed to polar residues. The segment covering 125–139 (SIISSKSSNKSTTVV) has biased composition (low complexity). Positions 155–273 (SFLIVDDNII…LDFMANSIDD (119 aa)) constitute a Response regulatory domain. D206 carries the post-translational modification 4-aspartylphosphate.

Functionally, required for stress adaptation, morphogenesis and virulence. The polypeptide is Stress response regulator protein 1 (SRR1) (Candida albicans (strain WO-1) (Yeast)).